Consider the following 301-residue polypeptide: MKIAILSRNPRLYSTRRLVEAGEQLGHEVDVIDTMHCYMDITSSNPSVRYDGKPLPKYDAVIPRIGASVTFYGTAVVRQFEMMGTYSINESVAISRSRDKLRSLQLMSRKGLGLPKTGFAHHPDKIGDLLKNVGGAPVVIKLLEGTQGIGVVLAESNKTAESIIEAFMGLKANILVQEYIKEAGGADIRCLVVGGKVIAAMKRQGAEGEFRSNLHRGGTASLIRLSPEERRTAVEAAKVMGLNMCGVDILRSNNGPLIMEVNSSPGLEGIESATGKDVASMIIKHIEKTAFLSSTKTKGKG.

Residues 104-287 (LQLMSRKGLG…VASMIIKHIE (184 aa)) form the ATP-grasp domain. ATP is bound by residues lysine 141, 178–179 (EY), aspartate 187, and 211–213 (RSN). Positions 248, 260, and 262 each coordinate Mg(2+). Mn(2+) contacts are provided by aspartate 248, glutamate 260, and asparagine 262.

Belongs to the RimK family. Requires Mg(2+) as cofactor. Mn(2+) is required as a cofactor.

The polypeptide is Probable alpha-L-glutamate ligase (Marinomonas sp. (strain MWYL1)).